Consider the following 545-residue polypeptide: ATP synthase subunit alpha (545 aa).

173 to 180 is an ATP binding site; it reads GDRKTGKT.

Belongs to the ATPase alpha/beta chains family. F-type ATPases have 2 components, CF(1) - the catalytic core - and CF(0) - the membrane proton channel. CF(1) has five subunits: alpha(3), beta(3), gamma(1), delta(1), epsilon(1). CF(0) has three main subunits: a(1), b(2) and c(9-12). The alpha and beta chains form an alternating ring which encloses part of the gamma chain. CF(1) is attached to CF(0) by a central stalk formed by the gamma and epsilon chains, while a peripheral stalk is formed by the delta and b chains.

The protein localises to the cell membrane. The catalysed reaction is ATP + H2O + 4 H(+)(in) = ADP + phosphate + 5 H(+)(out). Produces ATP from ADP in the presence of a proton gradient across the membrane. The alpha chain is a regulatory subunit. The polypeptide is ATP synthase subunit alpha (Renibacterium salmoninarum (strain ATCC 33209 / DSM 20767 / JCM 11484 / NBRC 15589 / NCIMB 2235)).